We begin with the raw amino-acid sequence, 432 residues long: Probable exopolygalacturonase X (432 aa).

An N-terminal signal peptide occupies residues 1-23; it reads MKFSYSFVQVVTLLLSLSPSVEG. N-linked (GlcNAc...) asparagine glycans are attached at residues N113, N129, and N199. The PbH1 1 repeat unit spans residues 231 to 252; the sequence is SDNIVIQNSVINNGDDCVSFKP. D245 acts as the Proton donor in catalysis. C247 and C264 are disulfide-bonded. N-linked (GlcNAc...) asparagine glycosylation is found at N253 and N265. PbH1 repeat units follow at residues 254-274, 285-306, and 327-348; these read STNI…SVGS, VQNV…RIKV, and VKNV…EVTQ. H268 is a catalytic residue. N-linked (GlcNAc...) asparagine glycans are attached at residues N292, N297, N329, N354, and N364. A PbH1 5 repeat occupies 362–394; that stretch reads PSNLTISDIHFKNFRGTTSGKRDPNVGTIVCSS. C392 and C398 are disulfide-bonded.

It belongs to the glycosyl hydrolase 28 family.

It is found in the secreted. The enzyme catalyses [(1-&gt;4)-alpha-D-galacturonosyl](n) + H2O = alpha-D-galacturonate + [(1-&gt;4)-alpha-D-galacturonosyl](n-1). Specific in hydrolyzing the terminal glycosidic bond of polygalacturonic acid and oligogalacturonates. The sequence is that of Probable exopolygalacturonase X (pgaX) from Aspergillus fumigatus (strain CBS 144.89 / FGSC A1163 / CEA10) (Neosartorya fumigata).